Here is an 898-residue protein sequence, read N- to C-terminus: MQTHEIRKRFLDHFVKAGHTEVPSASVILDDPNLLFVNAGMVQFVPYFLGQRTPPWDRAASVQKCIRTPDIDEVGITTRHNTFFQMAGNFSFGDYFKKGAIEFAWTLLTNPVEAGGYGFDPERLWATVYLDDDEAIGYWQEVAGLPLERIQRRGMADNYWSMGIPGPCGPSSEIYYDRGPEYGIEGGPEANEDRYIEIWNLVFMQNERGEGTSKEDFEILGPLPRKNIDTGMGVERVACLLQGVDNVYETDLLRPAIDLVAGIAPRGYGQGVHEDDVRYRIIADHSRTAAIIIGDGVSPGNEGRGYVLRRLLRRIIRAAKLLGVDDPIMAELMATVRDAMSPSYPELAADFDRIQRIAVAEETAFNRTLASGSKLFDDAARATKASGAEKLSGRDAFTLHDTYGFPIELTLEMAAEADLSVDEEGFRALMAEQRQRAKADAAARKQAHADLSAYRELVDAGPTEFTGFDELSSEARILGIFVDGKRVPVVAHTGREGAQERVELILDRSPFYAESGGQIADEGTVTGTGASETAKAAVTDVQKIAKTLWAHRINVESGEFVEGDTVVAAVDPRWRHGATQGHSGTHMVHAALRQVLGPNAVQAGSLNRPGYLRFDFNWQGALTDDQRSQIEEVTNQAVEADFEVHSFTTELDKAKAMGAMALFGENYPDEVRVVEIGGPFSLELCGGTHVRSSAQIGPVTILGESSVGSGVRRVEAYVGLDSFRHLAKERALMAGLASSLKVPSEEVPARVATLVEKLRAAEKELDRLRLAGARSAAVNAAAGAEQIGDVRLVAQRMAGGISGADLRSLVGEIRGKLGSDPAVVALIAEGDNDSVPFVVAVNPAAQDRGVRADELVKVMGAAVNGRGGGKADLAQGSGKGAAGIDAALAAIRAEIGRS.

4 residues coordinate Zn(2+): His-582, His-586, Cys-685, and His-689.

It belongs to the class-II aminoacyl-tRNA synthetase family. The cofactor is Zn(2+).

It localises to the cytoplasm. The enzyme catalyses tRNA(Ala) + L-alanine + ATP = L-alanyl-tRNA(Ala) + AMP + diphosphate. In terms of biological role, catalyzes the attachment of alanine to tRNA(Ala) in a two-step reaction: alanine is first activated by ATP to form Ala-AMP and then transferred to the acceptor end of tRNA(Ala). Also edits incorrectly charged Ser-tRNA(Ala) and Gly-tRNA(Ala) via its editing domain. The sequence is that of Alanine--tRNA ligase from Mycolicibacterium vanbaalenii (strain DSM 7251 / JCM 13017 / BCRC 16820 / KCTC 9966 / NRRL B-24157 / PYR-1) (Mycobacterium vanbaalenii).